The chain runs to 883 residues: Translation initiation factor IF-2 (883 aa).

2 disordered regions span residues 52–102 and 115–297; these read KGRD…VNVE and VEAE…PTQP. Basic and acidic residues-rich tracts occupy residues 115–179 and 204–237; these read VEAE…REAT and AAEK…ERAA. Low complexity predominate over residues 239–248; that stretch reads KTGATAPAAK. Basic residues predominate over residues 265-275; sequence PGRRGGKKGGR. Residues 276 to 285 are compositionally biased toward low complexity; that stretch reads RAASGGEAAK. The 168-residue stretch at 383-550 folds into the tr-type G domain; sequence PRPPVVTVMG…AILLQAELME (168 aa). The tract at residues 392-399 is G1; that stretch reads GHVDHGKT. 392–399 contacts GTP; the sequence is GHVDHGKT. The G2 stretch occupies residues 417-421; sequence GITQH. Residues 438–441 are G3; sequence DTPG. GTP-binding positions include 438–442 and 492–495; these read DTPGH and NKID. The interval 492–495 is G4; that stretch reads NKID. Residues 528–530 are G5; the sequence is SAK.

Belongs to the TRAFAC class translation factor GTPase superfamily. Classic translation factor GTPase family. IF-2 subfamily.

The protein localises to the cytoplasm. Functionally, one of the essential components for the initiation of protein synthesis. Protects formylmethionyl-tRNA from spontaneous hydrolysis and promotes its binding to the 30S ribosomal subunits. Also involved in the hydrolysis of GTP during the formation of the 70S ribosomal complex. The protein is Translation initiation factor IF-2 of Alkalilimnicola ehrlichii (strain ATCC BAA-1101 / DSM 17681 / MLHE-1).